A 177-amino-acid chain; its full sequence is Large ribosomal subunit protein uL6 (177 aa).

Belongs to the universal ribosomal protein uL6 family. Part of the 50S ribosomal subunit.

This protein binds to the 23S rRNA, and is important in its secondary structure. It is located near the subunit interface in the base of the L7/L12 stalk, and near the tRNA binding site of the peptidyltransferase center. The protein is Large ribosomal subunit protein uL6 of Brucella anthropi (strain ATCC 49188 / DSM 6882 / CCUG 24695 / JCM 21032 / LMG 3331 / NBRC 15819 / NCTC 12168 / Alc 37) (Ochrobactrum anthropi).